Consider the following 1309-residue polypeptide: Phospholipase A I (1309 aa).

LRR repeat units follow at residues 155–178 (LPLL…IGKL), 180–201 (NLKI…LRQC), 203–223 (GLVE…DFRA), and 224–248 (MAGL…PLHQ). ARM repeat units lie at residues 315 to 356 (DEGN…SLAR), 401 to 439 (SVSQ…NLAF), and 440 to 481 (CLEN…ILGE). In terms of domain architecture, PNPLA spans 502 to 746 (LTMDGGGMKG…VANNPTIFAI (245 aa)). Positions 506-511 (GGGMKG) match the GXGXXG motif. Residues 538–542 (GTSTG) carry the GXSXG motif. Catalysis depends on Ser540, which acts as the Nucleophile. Asp733 serves as the catalytic Proton acceptor. A DGA/G motif is present at residues 733–735 (DGA). The tract at residues 1183–1253 (VIGPSNEPQE…EDSDHEKTNR (71 aa)) is disordered. A compositionally biased stretch (polar residues) spans 1188–1208 (NEPQETPLITSQGSSEYNIGD). Acidic residues predominate over residues 1216–1235 (GEEEDEDEEVNEETEREEME).

It belongs to the patatin family.

It localises to the plastid. The protein localises to the chloroplast. Functionally, possesses non-specific lipolytic acyl hydrolase (LAH) activity. Catalyzes the hydrolysis of the galactolipids monogalactosyldiacylglycerol (MGDG) and digalactosyldiacylglycerol (DGDG), and less efficiently the phoshpolipids phosphatidylcholine (PC), phosphatidylethanolamine (PE), phosphatidylglycerol (PG), phosphatidylserine (PS) and phosphatidylinositol (PI). Hydrolyzes phospholipids at both the sn-1 and sn-2 positions. Involved in basal jasmonic acid production and promotes resistance to the necrotrophic fungal pathogen Botrytis cinerea. The polypeptide is Phospholipase A I (PLA1) (Arabidopsis thaliana (Mouse-ear cress)).